The sequence spans 277 residues: 4-hydroxy-3-methylbut-2-enyl diphosphate reductase (277 aa).

Residue Cys12 coordinates [4Fe-4S] cluster. The (2E)-4-hydroxy-3-methylbut-2-enyl diphosphate site is built by His36 and His70. Residues His36 and His70 each contribute to the dimethylallyl diphosphate site. Isopentenyl diphosphate contacts are provided by His36 and His70. Cys92 is a [4Fe-4S] cluster binding site. His120 provides a ligand contact to (2E)-4-hydroxy-3-methylbut-2-enyl diphosphate. His120 serves as a coordination point for dimethylallyl diphosphate. His120 contacts isopentenyl diphosphate. Catalysis depends on Glu122, which acts as the Proton donor. Position 158 (Thr158) interacts with (2E)-4-hydroxy-3-methylbut-2-enyl diphosphate. Position 186 (Cys186) interacts with [4Fe-4S] cluster. (2E)-4-hydroxy-3-methylbut-2-enyl diphosphate contacts are provided by Ser214, Asn216, and Ser258. 3 residues coordinate dimethylallyl diphosphate: Ser214, Asn216, and Ser258. Isopentenyl diphosphate-binding residues include Ser214, Asn216, and Ser258.

Belongs to the IspH family. [4Fe-4S] cluster serves as cofactor.

It carries out the reaction isopentenyl diphosphate + 2 oxidized [2Fe-2S]-[ferredoxin] + H2O = (2E)-4-hydroxy-3-methylbut-2-enyl diphosphate + 2 reduced [2Fe-2S]-[ferredoxin] + 2 H(+). The enzyme catalyses dimethylallyl diphosphate + 2 oxidized [2Fe-2S]-[ferredoxin] + H2O = (2E)-4-hydroxy-3-methylbut-2-enyl diphosphate + 2 reduced [2Fe-2S]-[ferredoxin] + 2 H(+). It participates in isoprenoid biosynthesis; dimethylallyl diphosphate biosynthesis; dimethylallyl diphosphate from (2E)-4-hydroxy-3-methylbutenyl diphosphate: step 1/1. It functions in the pathway isoprenoid biosynthesis; isopentenyl diphosphate biosynthesis via DXP pathway; isopentenyl diphosphate from 1-deoxy-D-xylulose 5-phosphate: step 6/6. Its function is as follows. Catalyzes the conversion of 1-hydroxy-2-methyl-2-(E)-butenyl 4-diphosphate (HMBPP) into a mixture of isopentenyl diphosphate (IPP) and dimethylallyl diphosphate (DMAPP). Acts in the terminal step of the DOXP/MEP pathway for isoprenoid precursor biosynthesis. This Campylobacter jejuni subsp. jejuni serotype O:23/36 (strain 81-176) protein is 4-hydroxy-3-methylbut-2-enyl diphosphate reductase.